Here is a 201-residue protein sequence, read N- to C-terminus: Small ribosomal subunit protein uS4c (201 aa).

The segment at 23–42 is disordered; that stretch reads SKKPRAGSNLRNQLRPGKKS. One can recognise an S4 RNA-binding domain in the interval 89-151; that stretch reads MRLDNILFRL…QKSKSLVQNY (63 aa).

It belongs to the universal ribosomal protein uS4 family. In terms of assembly, part of the 30S ribosomal subunit. Contacts protein S5. The interaction surface between S4 and S5 is involved in control of translational fidelity.

Its subcellular location is the plastid. The protein localises to the chloroplast. Its function is as follows. One of the primary rRNA binding proteins, it binds directly to 16S rRNA where it nucleates assembly of the body of the 30S subunit. In terms of biological role, with S5 and S12 plays an important role in translational accuracy. The sequence is that of Small ribosomal subunit protein uS4c (rps4) from Morus indica (Mulberry).